A 257-amino-acid chain; its full sequence is UPF0246 protein Mpe_A2092 (257 aa).

It belongs to the UPF0246 family.

This is UPF0246 protein Mpe_A2092 from Methylibium petroleiphilum (strain ATCC BAA-1232 / LMG 22953 / PM1).